Reading from the N-terminus, the 356-residue chain is Holliday junction branch migration complex subunit RuvB (356 aa).

The interval 4–190 is large ATPase domain (RuvB-L); that stretch reads TDKLAAERII…FGIVARLEFY (187 aa). ATP-binding positions include leucine 29, arginine 30, glycine 71, lysine 74, threonine 75, threonine 76, 137–139, arginine 180, tyrosine 190, and arginine 227; that span reads EDY. Position 75 (threonine 75) interacts with Mg(2+). The interval 191 to 261 is small ATPAse domain (RuvB-S); the sequence is DAEQLSRIVR…VADAALAMLD (71 aa). Positions 264 to 356 are head domain (RuvB-H); that stretch reads PVGFDLMDRK…NLWDTPDAEC (93 aa). Residues arginine 300, arginine 319, and arginine 324 each coordinate DNA.

Belongs to the RuvB family. Homohexamer. Forms an RuvA(8)-RuvB(12)-Holliday junction (HJ) complex. HJ DNA is sandwiched between 2 RuvA tetramers; dsDNA enters through RuvA and exits via RuvB. An RuvB hexamer assembles on each DNA strand where it exits the tetramer. Each RuvB hexamer is contacted by two RuvA subunits (via domain III) on 2 adjacent RuvB subunits; this complex drives branch migration. In the full resolvosome a probable DNA-RuvA(4)-RuvB(12)-RuvC(2) complex forms which resolves the HJ.

The protein resides in the cytoplasm. It carries out the reaction ATP + H2O = ADP + phosphate + H(+). In terms of biological role, the RuvA-RuvB-RuvC complex processes Holliday junction (HJ) DNA during genetic recombination and DNA repair, while the RuvA-RuvB complex plays an important role in the rescue of blocked DNA replication forks via replication fork reversal (RFR). RuvA specifically binds to HJ cruciform DNA, conferring on it an open structure. The RuvB hexamer acts as an ATP-dependent pump, pulling dsDNA into and through the RuvAB complex. RuvB forms 2 homohexamers on either side of HJ DNA bound by 1 or 2 RuvA tetramers; 4 subunits per hexamer contact DNA at a time. Coordinated motions by a converter formed by DNA-disengaged RuvB subunits stimulates ATP hydrolysis and nucleotide exchange. Immobilization of the converter enables RuvB to convert the ATP-contained energy into a lever motion, pulling 2 nucleotides of DNA out of the RuvA tetramer per ATP hydrolyzed, thus driving DNA branch migration. The RuvB motors rotate together with the DNA substrate, which together with the progressing nucleotide cycle form the mechanistic basis for DNA recombination by continuous HJ branch migration. Branch migration allows RuvC to scan DNA until it finds its consensus sequence, where it cleaves and resolves cruciform DNA. This is Holliday junction branch migration complex subunit RuvB from Burkholderia pseudomallei (strain 668).